Reading from the N-terminus, the 401-residue chain is Phosphoglycerate kinase (401 aa).

Substrate contacts are provided by residues 26 to 28, arginine 41, 64 to 67, arginine 123, and arginine 156; these read DLN and HLGR. ATP is bound by residues lysine 207, glycine 298, glutamate 329, and 355–358; that span reads GGDS.

This sequence belongs to the phosphoglycerate kinase family. In terms of assembly, monomer.

The protein resides in the cytoplasm. The enzyme catalyses (2R)-3-phosphoglycerate + ATP = (2R)-3-phospho-glyceroyl phosphate + ADP. The protein operates within carbohydrate degradation; glycolysis; pyruvate from D-glyceraldehyde 3-phosphate: step 2/5. This chain is Phosphoglycerate kinase, found in Bdellovibrio bacteriovorus (strain ATCC 15356 / DSM 50701 / NCIMB 9529 / HD100).